The primary structure comprises 561 residues: Transmembrane protein 209 (561 aa).

A phosphoserine mark is found at serine 9 and serine 11. The helical transmembrane segment at 28–48 threads the bilayer; that stretch reads VVLAWGLLNVSMAGMIYTEMT. Asparagine 57 is a glycosylation site (N-linked (GlcNAc...) asparagine). Residues 60–80 form a helical membrane-spanning segment; it reads YWPLWYIELALASLFSLNALF. Serine 98 carries the phosphoserine modification. Disordered stretches follow at residues 120-156 and 196-233; these read LAAT…KFAT and SLSP…TDKE. Residues 138-152 show a composition bias toward low complexity; it reads SVLSYSPSRSPSTSP. Serine 201 and serine 248 each carry phosphoserine. A disordered region spans residues 250–270; it reads EEKQHRVKLGSPDSTSPSTSP. The segment covering 260–270 has biased composition (low complexity); the sequence is SPDSTSPSTSP. Residue asparagine 274 is glycosylated (N-linked (GlcNAc...) asparagine). A Phosphoserine modification is found at serine 278.

As to quaternary structure, interacts with NUP205.

It localises to the membrane. The protein resides in the nucleus envelope. Its subcellular location is the golgi apparatus. The protein localises to the cytoplasm. In terms of biological role, nuclear envelope protein which in association with NUP205, may be involved in nuclear transport of various nuclear proteins in addition to MYC. The chain is Transmembrane protein 209 (Tmem209) from Rattus norvegicus (Rat).